The sequence spans 241 residues: 1-Cys peroxiredoxin (241 aa).

In terms of domain architecture, Thioredoxin spans 33–189 (LRIGDVVPDF…IIRILDSFQL (157 aa)). Residue C75 is the Cysteine sulfenic acid (-SOH) intermediate of the active site.

Belongs to the peroxiredoxin family. Prx6 subfamily. In terms of assembly, homodimer.

The catalysed reaction is a hydroperoxide + [thioredoxin]-dithiol = an alcohol + [thioredoxin]-disulfide + H2O. Thiol-specific peroxidase that catalyzes the reduction of hydrogen peroxide and organic hydroperoxides to water and alcohols, respectively. Plays a role in cell protection against oxidative stress by detoxifying peroxides. This Dictyostelium discoideum (Social amoeba) protein is 1-Cys peroxiredoxin.